We begin with the raw amino-acid sequence, 282 residues long: MKLLRYGPSGQEKPGILDAAGRIRDLSAHVPDLAGDVLSDAGLARLRAIDPATLPLVSGEPRIGACVGHVGKFIGIGLNYADHAAEAGMPVPKEPVVFGKWTSSICGPNDGIDIPKGSVKTDWEVELGVVIGAKCKDVDEARALDYVAGYCVVNDVSEREWQIERGGQWDKGKGFDTFGPIGPWLVTRDEVPDPQRLDLWLEIDGHRYQNGNTRTMVFTVAQLVAYLSTCMTLQPGDVITTGTPPGVGMGVKPSPVFLKAGQTVRLGIEGLGEQLQRTRDAQ.

Positions 124, 126, and 155 each coordinate Mg(2+).

Belongs to the FAH family. Requires Mg(2+) as cofactor.

This is Putative hydrolase Bcen_5340 from Burkholderia orbicola (strain AU 1054).